The chain runs to 92 residues: Acyl carrier protein AcpXL (92 aa).

In terms of domain architecture, Carrier spans 2–88 (TATFDKVADI…NLCAKIDELK (87 aa)). Serine 37 is modified (O-(pantetheine 4'-phosphoryl)serine).

4'-phosphopantetheine is transferred from CoA to a specific serine of apo-ACP by AcpS. This modification is essential for activity because fatty acids are bound in thioester linkage to the sulfhydryl of the prosthetic group.

The protein resides in the cytoplasm. The protein operates within glycolipid biosynthesis; KDO(2)-lipid A biosynthesis. In terms of biological role, carrier of the growing fatty acid chain in fatty acid biosynthesis. Is involved in the transfer of long hydroxylated fatty acids to lipid A. Is acylated predominantly with 27-hydroxyoctacosanoic acid. The chain is Acyl carrier protein AcpXL (acpXL) from Rhizobium etli (strain ATCC 51251 / DSM 11541 / JCM 21823 / NBRC 15573 / CFN 42).